We begin with the raw amino-acid sequence, 55 residues long: ATP synthase protein 8 (55 aa).

The helical transmembrane segment at 4 to 24 (LDPAPWFSMLTVSWLIIFLLI) threads the bilayer.

Belongs to the ATPase protein 8 family. As to quaternary structure, F-type ATPases have 2 components, CF(1) - the catalytic core - and CF(0) - the membrane proton channel.

The protein resides in the mitochondrion membrane. Its function is as follows. Mitochondrial membrane ATP synthase (F(1)F(0) ATP synthase or Complex V) produces ATP from ADP in the presence of a proton gradient across the membrane which is generated by electron transport complexes of the respiratory chain. F-type ATPases consist of two structural domains, F(1) - containing the extramembraneous catalytic core and F(0) - containing the membrane proton channel, linked together by a central stalk and a peripheral stalk. During catalysis, ATP synthesis in the catalytic domain of F(1) is coupled via a rotary mechanism of the central stalk subunits to proton translocation. Part of the complex F(0) domain. Minor subunit located with subunit a in the membrane. The sequence is that of ATP synthase protein 8 (MT-ATP8) from Petromyzon marinus (Sea lamprey).